Reading from the N-terminus, the 174-residue chain is NADH-quinone oxidoreductase subunit B (174 aa).

Residues Cys51, Cys52, Cys116, and Cys146 each contribute to the [4Fe-4S] cluster site.

The protein belongs to the complex I 20 kDa subunit family. NDH-1 is composed of 14 different subunits. Subunits NuoB, C, D, E, F, and G constitute the peripheral sector of the complex. Requires [4Fe-4S] cluster as cofactor.

It localises to the cell inner membrane. The enzyme catalyses a quinone + NADH + 5 H(+)(in) = a quinol + NAD(+) + 4 H(+)(out). Functionally, NDH-1 shuttles electrons from NADH, via FMN and iron-sulfur (Fe-S) centers, to quinones in the respiratory chain. The immediate electron acceptor for the enzyme in this species is believed to be ubiquinone. Couples the redox reaction to proton translocation (for every two electrons transferred, four hydrogen ions are translocated across the cytoplasmic membrane), and thus conserves the redox energy in a proton gradient. This chain is NADH-quinone oxidoreductase subunit B, found in Anaplasma phagocytophilum (strain HZ).